The primary structure comprises 61 residues: Japonicin-1CDYa (61 aa).

The N-terminal stretch at 1 to 22 (MFTLKKSLLLLFFLGVINVSLC) is a signal peptide. Positions 23–45 (EEERDADEEERRDDPEERDVEVE) are excised as a propeptide. Cys55 and Cys61 are joined by a disulfide.

Belongs to the frog skin active peptide (FSAP) family. Brevinin subfamily. As to expression, expressed by the skin glands.

The protein resides in the secreted. In terms of biological role, antimicrobial peptide. Has low activity against the Gram-positive bacterium S.aureus (MIC&gt;100 uM) and the Gram-negative bacterium E.coli (MIC=25 uM). Lacks hemolytic activity against human erythrocytes. This is Japonicin-1CDYa from Rana dybowskii (Dybovsky's frog).